The primary structure comprises 350 residues: S-adenosylmethionine:tRNA ribosyltransferase-isomerase (350 aa).

This sequence belongs to the QueA family. Monomer.

The protein localises to the cytoplasm. The enzyme catalyses 7-aminomethyl-7-carbaguanosine(34) in tRNA + S-adenosyl-L-methionine = epoxyqueuosine(34) in tRNA + adenine + L-methionine + 2 H(+). It functions in the pathway tRNA modification; tRNA-queuosine biosynthesis. In terms of biological role, transfers and isomerizes the ribose moiety from AdoMet to the 7-aminomethyl group of 7-deazaguanine (preQ1-tRNA) to give epoxyqueuosine (oQ-tRNA). This chain is S-adenosylmethionine:tRNA ribosyltransferase-isomerase, found in Bacillus cereus (strain 03BB102).